Consider the following 109-residue polypeptide: SIAFSRAVFAEFLATLLFVFFGLGSALNWPSALPSTLQIAMAFGLGIGTLVQALGHVSGAHINPAVTVACLVGCHVSFLRAAFYVAAQLLGAVAGAALLHEITPAEVRG.

Topologically, residues 1–6 (SIAFSR) are cytoplasmic. The chain crosses the membrane as a helical span at residues 7–27 (AVFAEFLATLLFVFFGLGSAL). The Extracellular portion of the chain corresponds to 28–35 (NWPSALPS). Residues 36-54 (TLQIAMAFGLGIGTLVQAL) traverse the membrane as a helical segment. Residues 55-59 (GHVSG) are Cytoplasmic-facing. Positions 60 to 69 (AHINPAVTVA) form an intramembrane region, discontinuously helical. The NPA 1 signature appears at 63-65 (NPA). At 70 to 80 (CLVGCHVSFLR) the chain is on the cytoplasmic side. Residues 81–102 (AAFYVAAQLLGAVAGAALLHEI) form a helical membrane-spanning segment. Residues 103–109 (TPAEVRG) are Extracellular-facing.

Belongs to the MIP/aquaporin (TC 1.A.8) family. Homotetramer. Serine phosphorylation is necessary and sufficient for expression at the apical membrane. Endocytosis is not phosphorylation-dependent. In terms of processing, N-glycosylated.

The protein resides in the apical cell membrane. Its subcellular location is the basolateral cell membrane. The protein localises to the cell membrane. It is found in the cytoplasmic vesicle membrane. It localises to the golgi apparatus. The protein resides in the trans-Golgi network membrane. It catalyses the reaction H2O(in) = H2O(out). The catalysed reaction is glycerol(in) = glycerol(out). Forms a water-specific channel that provides the plasma membranes of renal collecting duct with high permeability to water, thereby permitting water to move in the direction of an osmotic gradient. Plays an essential role in renal water homeostasis. Could also be permeable to glycerol. This Oryctolagus cuniculus (Rabbit) protein is Aquaporin-2.